Consider the following 315-residue polypeptide: Aspartate carbamoyltransferase catalytic subunit (315 aa).

Residues Arg64 and Thr65 each coordinate carbamoyl phosphate. An L-aspartate-binding site is contributed by Lys92. Carbamoyl phosphate-binding residues include Arg114, His142, and Gln145. Residues Arg175 and Arg229 each coordinate L-aspartate. Residues Gly270 and Pro271 each contribute to the carbamoyl phosphate site.

This sequence belongs to the aspartate/ornithine carbamoyltransferase superfamily. ATCase family. Heterododecamer (2C3:3R2) of six catalytic PyrB chains organized as two trimers (C3), and six regulatory PyrI chains organized as three dimers (R2).

The catalysed reaction is carbamoyl phosphate + L-aspartate = N-carbamoyl-L-aspartate + phosphate + H(+). Its pathway is pyrimidine metabolism; UMP biosynthesis via de novo pathway; (S)-dihydroorotate from bicarbonate: step 2/3. Its function is as follows. Catalyzes the condensation of carbamoyl phosphate and aspartate to form carbamoyl aspartate and inorganic phosphate, the committed step in the de novo pyrimidine nucleotide biosynthesis pathway. The chain is Aspartate carbamoyltransferase catalytic subunit from Methylorubrum populi (strain ATCC BAA-705 / NCIMB 13946 / BJ001) (Methylobacterium populi).